A 382-amino-acid polypeptide reads, in one-letter code: Mannitol-1-phosphate 5-dehydrogenase (382 aa).

4 to 15 lines the NAD(+) pocket; sequence AVHFGAGNIGRG.

It belongs to the mannitol dehydrogenase family.

The enzyme catalyses D-mannitol 1-phosphate + NAD(+) = beta-D-fructose 6-phosphate + NADH + H(+). This Vibrio parahaemolyticus serotype O3:K6 (strain RIMD 2210633) protein is Mannitol-1-phosphate 5-dehydrogenase.